The primary structure comprises 498 residues: ATP synthase subunit beta, chloroplastic (498 aa).

An ATP-binding site is contributed by 172 to 179; sequence GGAGVGKT.

It belongs to the ATPase alpha/beta chains family. As to quaternary structure, F-type ATPases have 2 components, CF(1) - the catalytic core - and CF(0) - the membrane proton channel. CF(1) has five subunits: alpha(3), beta(3), gamma(1), delta(1), epsilon(1). CF(0) has four main subunits: a(1), b(1), b'(1) and c(9-12).

Its subcellular location is the plastid. It is found in the chloroplast thylakoid membrane. It carries out the reaction ATP + H2O + 4 H(+)(in) = ADP + phosphate + 5 H(+)(out). In terms of biological role, produces ATP from ADP in the presence of a proton gradient across the membrane. The catalytic sites are hosted primarily by the beta subunits. The chain is ATP synthase subunit beta, chloroplastic from Nicotiana sylvestris (Wood tobacco).